We begin with the raw amino-acid sequence, 208 residues long: uncharacterized protein (208 aa).

Residues 4–71 enclose the J domain; the sequence is DYYAILNITP…SRRAQYDRES (68 aa). The tract at residues 67 to 100 is disordered; that stretch reads YDRESASSSAKPRQSFFSRTNPQPQSQSQQGGPS. The segment covering 72 to 87 has biased composition (polar residues); that stretch reads ASSSAKPRQSFFSRTN. Over residues 88–100 the composition is skewed to low complexity; the sequence is PQPQSQSQQGGPS. A helical membrane pass occupies residues 127–147; the sequence is GIANAFWTIVGTLAGAALGFI.

The protein belongs to the DnaJ family.

The protein resides in the endoplasmic reticulum membrane. This is an uncharacterized protein from Schizosaccharomyces pombe (strain 972 / ATCC 24843) (Fission yeast).